A 306-amino-acid polypeptide reads, in one-letter code: MSPAASSATRPSTLPPVRGRLTAGAPLAPLVWFKSGGAAEWLFEPADVDDLSDFLAALDPAVPVMGLGLGSNLIVRDGGVPGVVVRLGKPFARVERLDATTLRCGGGASGILVSSTARDAGIGGVEFLRSIPGTVGGFVRMNGGAYGREVKDVLVEGEVVLRSGERRVLSLAELGYTYRHSALPEGAIVVAATFRGHAEAPAVVQAEMDRIAAEREASQPLRSRTGGSTFKNPQGHKAWQLVDAAGCRGLTRGDAQVSEKHCNFLLNLGTASSADIEGLGEEVRERVKANSGVTLEWEIQRVGVNP.

Positions 34 to 199 constitute an FAD-binding PCMH-type domain; that stretch reads KSGGAAEWLF…VAATFRGHAE (166 aa). Residue Arg-179 is part of the active site. Residues 215 to 234 are disordered; the sequence is REASQPLRSRTGGSTFKNPQ. The span at 220-232 shows a compositional bias: polar residues; the sequence is PLRSRTGGSTFKN. Residue Ser-228 is the Proton donor of the active site. Glu-298 is an active-site residue.

The protein belongs to the MurB family. FAD is required as a cofactor.

The protein resides in the cytoplasm. The enzyme catalyses UDP-N-acetyl-alpha-D-muramate + NADP(+) = UDP-N-acetyl-3-O-(1-carboxyvinyl)-alpha-D-glucosamine + NADPH + H(+). Its pathway is cell wall biogenesis; peptidoglycan biosynthesis. Its function is as follows. Cell wall formation. The protein is UDP-N-acetylenolpyruvoylglucosamine reductase of Rhizorhabdus wittichii (strain DSM 6014 / CCUG 31198 / JCM 15750 / NBRC 105917 / EY 4224 / RW1) (Sphingomonas wittichii).